Consider the following 499-residue polypeptide: Glutelin type-A 2 (499 aa).

Residues 1-24 (MASINRPIVFFTVCLFLLCDGSLA) form the signal peptide. Disulfide bonds link cysteine 46-cysteine 79 and cysteine 122-cysteine 313. Residues 51 to 248 (LQAFEPIRSV…AFGISNQVAR (198 aa)) form the Cupin type-1 1 domain. The segment at 280–300 (EQGQMQSREHYQEGGYQQSQY) is disordered. The Cupin type-1 2 domain occupies 319–468 (QNIDNPNRAD…AYRISREEAQ (150 aa)).

The protein belongs to the 11S seed storage protein (globulins) family. As to quaternary structure, hexamer; each subunit is composed of an acidic and a basic chain derived from a single precursor and linked by a disulfide bond.

In terms of biological role, seed storage protein. The chain is Glutelin type-A 2 (GLUA2) from Oryza sativa subsp. japonica (Rice).